The following is a 210-amino-acid chain: Putative methyltransferase ECU09_1500 (210 aa).

Belongs to the methyltransferase superfamily.

The sequence is that of Putative methyltransferase ECU09_1500 from Encephalitozoon cuniculi (strain GB-M1) (Microsporidian parasite).